The sequence spans 89 residues: Elongation factor 1-beta (89 aa).

This sequence belongs to the EF-1-beta/EF-1-delta family.

Promotes the exchange of GDP for GTP in EF-1-alpha/GDP, thus allowing the regeneration of EF-1-alpha/GTP that could then be used to form the ternary complex EF-1-alpha/GTP/AAtRNA. The polypeptide is Elongation factor 1-beta (Methanococcus maripaludis (strain C6 / ATCC BAA-1332)).